The chain runs to 153 residues: Ribosomal RNA large subunit methyltransferase H (153 aa).

Positions 71 and 102 each coordinate S-adenosyl-L-methionine.

It belongs to the RNA methyltransferase RlmH family. In terms of assembly, homodimer.

The protein localises to the cytoplasm. The enzyme catalyses pseudouridine(1915) in 23S rRNA + S-adenosyl-L-methionine = N(3)-methylpseudouridine(1915) in 23S rRNA + S-adenosyl-L-homocysteine + H(+). Specifically methylates the pseudouridine at position 1915 (m3Psi1915) in 23S rRNA. The sequence is that of Ribosomal RNA large subunit methyltransferase H from Anaeromyxobacter dehalogenans (strain 2CP-C).